The sequence spans 156 residues: Small ribosomal subunit protein uS7 (156 aa).

Belongs to the universal ribosomal protein uS7 family. In terms of assembly, part of the 30S ribosomal subunit. Contacts proteins S9 and S11.

Its function is as follows. One of the primary rRNA binding proteins, it binds directly to 16S rRNA where it nucleates assembly of the head domain of the 30S subunit. Is located at the subunit interface close to the decoding center, probably blocks exit of the E-site tRNA. The sequence is that of Small ribosomal subunit protein uS7 from Nitratiruptor sp. (strain SB155-2).